Here is a 193-residue protein sequence, read N- to C-terminus: Internal protein III (193 aa).

A propeptide spanning residues 1-10 (MKTYQEFIAE) is cleaved from the precursor.

Functionally, internal protein III is one of four proteins in a complex that functions in bacteriophage head maturation. In Enterobacteria phage T4 (Bacteriophage T4), this protein is Internal protein III (ipi3).